The primary structure comprises 270 residues: Phosphonoacetaldehyde hydrolase (270 aa).

The Nucleophile role is filled by Asp-11. Residues Asp-11 and Ala-13 each coordinate Mg(2+). Lys-53 functions as the Schiff-base intermediate with substrate in the catalytic mechanism. Asp-187 lines the Mg(2+) pocket.

The protein belongs to the HAD-like hydrolase superfamily. PhnX family. In terms of assembly, homodimer. The cofactor is Mg(2+).

It carries out the reaction phosphonoacetaldehyde + H2O = acetaldehyde + phosphate + H(+). Functionally, involved in phosphonate degradation. The polypeptide is Phosphonoacetaldehyde hydrolase (Salmonella choleraesuis (strain SC-B67)).